Reading from the N-terminus, the 300-residue chain is ETS homologous factor (300 aa).

Residues 29 to 115 (PTCNVSSGFF…SNLQHLKWNG (87 aa)) form the PNT domain. The interval 181 to 203 (VAESPDMKKEQDHPVKSHTKKHN) is disordered. Residues 185–195 (PDMKKEQDHPV) are compositionally biased toward basic and acidic residues. Residues 207–289 (THLWEFIRDI…DGRRLVYKFG (83 aa)) constitute a DNA-binding region (ETS).

Belongs to the ETS family. Highly expressed in kidney and lung, weakly in skeletal muscle, heart, and liver, and not detected in brain, spleen or testis.

It is found in the nucleus. Functionally, transcriptional activator that may play a role in regulating epithelial cell differentiation and proliferation. May act as a repressor for a specific subset of ETS/AP-1-responsive genes, and as a modulator of the nuclear response to mitogen-activated protein kinase signaling cascades. Binds to DNA sequences containing the consensus nucleotide core sequence GGAA. Involved in regulation of TNFRSF10B/DR5 expression through Ets-binding sequences on the TNFRSF10B/DR5 promoter. The chain is ETS homologous factor from Mus musculus (Mouse).